The primary structure comprises 608 residues: Serine/threonine-protein kinase SSN3 (608 aa).

Residues 1–72 form a disordered region; it reads MSYSSASFRK…PGTVGTRTSI (72 aa). Positions 17-47 are enriched in low complexity; sequence SQPSQTTTTTTSANQPQSQSQQQPLQQSQQQ. A compositionally biased stretch (basic residues) spans 49 to 59; the sequence is LHMKPNPHIPH. The 389-residue stretch at 104-492 folds into the Protein kinase domain; sequence YQIMGYIAAG…ADQALLHPYF (389 aa). ATP contacts are provided by residues 110–118 and K182; that span reads IAAGTYGKV. The active-site Proton acceptor is D307. The tract at residues 523–608 is disordered; sequence MTTAANNNNN…LPGGIRKKRG (86 aa). Over residues 528–583 the composition is skewed to low complexity; that stretch reads NNNNNNNNNNNNNNNNNNNNNNNNNNNSGHQLSQQQNVQIQQVHQMQQQIHSQQLQ.

This sequence belongs to the protein kinase superfamily. CMGC Ser/Thr protein kinase family. CDC2/CDKX subfamily. As to quaternary structure, component of the SRB8-11 complex, a regulatory module of the Mediator complex. Mg(2+) is required as a cofactor.

It is found in the nucleus. The enzyme catalyses L-seryl-[protein] + ATP = O-phospho-L-seryl-[protein] + ADP + H(+). It carries out the reaction L-threonyl-[protein] + ATP = O-phospho-L-threonyl-[protein] + ADP + H(+). It catalyses the reaction [DNA-directed RNA polymerase] + ATP = phospho-[DNA-directed RNA polymerase] + ADP + H(+). Functionally, component of the SRB8-11 complex. The SRB8-11 complex is a regulatory module of the Mediator complex which is itself involved in regulation of basal and activated RNA polymerase II-dependent transcription. The SRB8-11 complex may be involved in the transcriptional repression of a subset of genes regulated by Mediator. It may inhibit the association of the Mediator complex with RNA polymerase II to form the holoenzyme complex. The SRB8-11 complex phosphorylates the C-terminal domain (CTD) of the largest subunit of RNA polymerase II. This Candida albicans (strain SC5314 / ATCC MYA-2876) (Yeast) protein is Serine/threonine-protein kinase SSN3 (SSN3).